The chain runs to 200 residues: Interferon lambda-1 (200 aa).

Residues 1–19 (MAAAWTVVLVTLVLGLAVA) form the signal peptide. N-linked (GlcNAc...) asparagine glycosylation is present at N65. C68 and C164 are disulfide-bonded.

The protein belongs to the lambda interferon family.

Its subcellular location is the secreted. Cytokine with antiviral, antitumour and immunomodulatory activities. Plays a critical role in the antiviral host defense, predominantly in the epithelial tissues. Acts as a ligand for the heterodimeric class II cytokine receptor composed of IL10RB and IFNLR1, and receptor engagement leads to the activation of the JAK/STAT signaling pathway resulting in the expression of IFN-stimulated genes (ISG), which mediate the antiviral state. Has a restricted receptor distribution and therefore restricted targets: is primarily active in epithelial cells and this cell type-selective action is because of the epithelial cell-specific expression of its receptor IFNLR1. Exerts an immunomodulatory effect by up-regulating MHC class I antigen expression. The chain is Interferon lambda-1 (IFNL1) from Homo sapiens (Human).